A 460-amino-acid polypeptide reads, in one-letter code: Protein king tubby (460 aa).

Disordered regions lie at residues 75–97 and 115–208; these read NGSPGGINPVAMNTSRNHSNNMR and HELE…EGDV. Over residues 85-97 the composition is skewed to polar residues; it reads AMNTSRNHSNNMR. A compositionally biased stretch (low complexity) spans 130-145; that stretch reads QHQQSASHSANSTQSQ. Serine 153 is subject to Phosphoserine. Gly residues predominate over residues 194–203; it reads NGTGNGTGGE.

Belongs to the TUB family. As to expression, detected in sensory neurons which have a ciliary structure such as the chordotonal neurons, Orco-expressing olfactory receptor neurons, labellar gustatory receptor neurons and in the femoral chordotonal organ (at protein level). In the chordotonal neurons of the Johnston's organ expressed in the proximal to distal cilia, with lower levels of expression in the distal portion (at protein level). Also detected in the salivary glands and antenna (at protein level). Expressed in photoreceptor cells (at protein level). At stage 9 expression is detected in a subset of neuroblasts. By stage 12 expression is found in both the CNS and PNS. In late-stage embryos, expression persists in the CNS and PNS with more abundant expression in the antennal-maxillary sensory neurons and in bilateral groups of cells in the brain.

It localises to the cytoplasm. It is found in the nucleus. The protein resides in the cell projection. The protein localises to the cilium membrane. Its subcellular location is the rhabdomere. Its function is as follows. Functions in regulating protein trafficking, retinal maintenance and lipid storage. Protects photoreceptor cells R1 to R6 against light-induced retinal degeneration by stimulating norpA-mediated endocytosis of the rhodopsin ninaE (Rh1). In the auditory receptor neurons, functions as a cilia trafficking regulator of various transient receptor potential (TRP) channel components including iav and nompC. Likely to deliver pre-ciliary vesicles containing membrane proteins such as iav and nompC to the intraflagellar transport complex (IFT) at the cilia base. Plays a role in the inhibition of fat storage. This chain is Protein king tubby (ktub), found in Drosophila melanogaster (Fruit fly).